The primary structure comprises 1302 residues: Phosphoribosylformylglycinamidine synthase (1302 aa).

ATP-binding positions include 307–318 (GASTGSGGEIRD) and Ala-678. Positions 718, 722, and 891 each coordinate Mg(2+). The Glutamine amidotransferase type-1 domain occupies 1049–1302 (MAILREQGVN…MFQNARKNIG (254 aa)). Cys-1142 acts as the Nucleophile in catalysis. Catalysis depends on residues His-1267 and Glu-1269.

It in the N-terminal section; belongs to the FGAMS family. Monomer.

The protein localises to the cytoplasm. It catalyses the reaction N(2)-formyl-N(1)-(5-phospho-beta-D-ribosyl)glycinamide + L-glutamine + ATP + H2O = 2-formamido-N(1)-(5-O-phospho-beta-D-ribosyl)acetamidine + L-glutamate + ADP + phosphate + H(+). It participates in purine metabolism; IMP biosynthesis via de novo pathway; 5-amino-1-(5-phospho-D-ribosyl)imidazole from N(2)-formyl-N(1)-(5-phospho-D-ribosyl)glycinamide: step 1/2. Functionally, phosphoribosylformylglycinamidine synthase involved in the purines biosynthetic pathway. Catalyzes the ATP-dependent conversion of formylglycinamide ribonucleotide (FGAR) and glutamine to yield formylglycinamidine ribonucleotide (FGAM) and glutamate. In Vibrio parahaemolyticus serotype O3:K6 (strain RIMD 2210633), this protein is Phosphoribosylformylglycinamidine synthase.